A 231-amino-acid chain; its full sequence is Probable septum site-determining protein MinC (231 aa).

Residues glycine 101–threonine 125 are disordered. Positions alanine 114–threonine 123 are enriched in low complexity.

Belongs to the MinC family. In terms of assembly, interacts with MinD and FtsZ.

Cell division inhibitor that blocks the formation of polar Z ring septums. Rapidly oscillates between the poles of the cell to destabilize FtsZ filaments that have formed before they mature into polar Z rings. Prevents FtsZ polymerization. In Escherichia coli (strain ATCC 8739 / DSM 1576 / NBRC 3972 / NCIMB 8545 / WDCM 00012 / Crooks), this protein is Probable septum site-determining protein MinC.